A 153-amino-acid chain; its full sequence is Transcriptional repressor NrdR (153 aa).

Residues 3–34 fold into a zinc finger; it reads CPSCHHSGTRVLESRPVEEGRSIRRRRECEQC. Residues 49–139 form the ATP-cone domain; that stretch reads LIVVKKEGTR…VYRQFKDINV (91 aa).

Belongs to the NrdR family. The cofactor is Zn(2+).

Functionally, negatively regulates transcription of bacterial ribonucleotide reductase nrd genes and operons by binding to NrdR-boxes. The protein is Transcriptional repressor NrdR of Geobacillus kaustophilus (strain HTA426).